The following is a 411-amino-acid chain: Multifunctional CCA protein (411 aa).

Positions 8 and 11 each coordinate ATP. 2 residues coordinate CTP: Gly8 and Arg11. Asp21 and Asp23 together coordinate Mg(2+). ATP-binding residues include Arg91, Arg137, and Arg140. CTP contacts are provided by Arg91, Arg137, and Arg140. The 102-residue stretch at 226–327 (TGVHVMLVID…LRFLQETDAL (102 aa)) folds into the HD domain.

Belongs to the tRNA nucleotidyltransferase/poly(A) polymerase family. Bacterial CCA-adding enzyme type 1 subfamily. Monomer. Can also form homodimers and oligomers. Requires Mg(2+) as cofactor. Ni(2+) is required as a cofactor.

The enzyme catalyses a tRNA precursor + 2 CTP + ATP = a tRNA with a 3' CCA end + 3 diphosphate. It catalyses the reaction a tRNA with a 3' CCA end + 2 CTP + ATP = a tRNA with a 3' CCACCA end + 3 diphosphate. Functionally, catalyzes the addition and repair of the essential 3'-terminal CCA sequence in tRNAs without using a nucleic acid template. Adds these three nucleotides in the order of C, C, and A to the tRNA nucleotide-73, using CTP and ATP as substrates and producing inorganic pyrophosphate. tRNA 3'-terminal CCA addition is required both for tRNA processing and repair. Also involved in tRNA surveillance by mediating tandem CCA addition to generate a CCACCA at the 3' terminus of unstable tRNAs. While stable tRNAs receive only 3'-terminal CCA, unstable tRNAs are marked with CCACCA and rapidly degraded. In Methylobacillus flagellatus (strain ATCC 51484 / DSM 6875 / VKM B-1610 / KT), this protein is Multifunctional CCA protein.